The chain runs to 156 residues: Endoribonuclease YbeY (156 aa).

Zn(2+) contacts are provided by His122, His126, and His132.

It belongs to the endoribonuclease YbeY family. The cofactor is Zn(2+).

Its subcellular location is the cytoplasm. Functionally, single strand-specific metallo-endoribonuclease involved in late-stage 70S ribosome quality control and in maturation of the 3' terminus of the 16S rRNA. The protein is Endoribonuclease YbeY of Bacillus mycoides (strain KBAB4) (Bacillus weihenstephanensis).